The sequence spans 507 residues: Zinc finger CCCH-type with G patch domain-containing protein (507 aa).

Position 1 is an N-acetylmethionine (Met-1). The tract at residues 88–125 is disordered; sequence PVDPGNDSKTVPGSEVQPTPTSSALEEEEEDPDLEDLS. Over residues 94 to 111 the composition is skewed to polar residues; the sequence is DSKTVPGSEVQPTPTSSA. Residues 112–123 are compositionally biased toward acidic residues; it reads LEEEEEDPDLED. The segment at 170–196 adopts a C3H1-type zinc-finger fold; that stretch reads KSLKPCPFFLEGKCRFKENCRFSHGQL. Positions 264–283 are disordered; it reads LRTEATDSSDSDTGDASDSS. Ser-272 carries the phosphoserine modification. The residue at position 276 (Thr-276) is a Phosphothreonine. A G-patch domain is found at 309–355; sequence TRGIGSKLLVKMGYEFGKGLGRHAEGRVEPIHAVVLPRGKSLDQCAE. Ser-349 is modified (phosphoserine). 2 disordered regions span residues 359 to 389 and 486 to 507; these read KKTKQGQTGASRPPRCRRRSSRPEGRPPPRN and AQEADLQRKQRKADTHRKMTEF. Basic and acidic residues predominate over residues 487–507; sequence QEADLQRKQRKADTHRKMTEF.

In terms of assembly, interacts with CHD4/Mi-2; the interaction is direct.

It is found in the nucleus. Its function is as follows. Transcription repressor that specifically binds the 5'-GGAG[GA]A[GA]A-3' consensus sequence. Represses transcription by recruiting the chromatin multiprotein complex NuRD to target promoters. Negatively regulates expression of EGFR, a gene involved in cell proliferation, survival and migration. Its ability to repress genes of the EGFR pathway suggest it may act as a tumor suppressor. The sequence is that of Zinc finger CCCH-type with G patch domain-containing protein (Zgpat) from Rattus norvegicus (Rat).